The chain runs to 340 residues: Thioesterase pkgB (340 aa).

The Zn(2+) site is built by H97, H99, D101, H102, and H205. D101 functions as the Proton donor/acceptor in the catalytic mechanism. Low complexity predominate over residues 242–258; that stretch reads SSRNGGSTSSIGSVSES. A disordered region spans residues 242–271; that stretch reads SSRNGGSTSSIGSVSESGDSDEEDNNMKTS.

It belongs to the metallo-beta-lactamase superfamily. Zn(2+) is required as a cofactor.

It catalyses the reaction 3,5,7,9,11,13-hexaoxotetradecanoyl-[ACP] = dehydrocitreoisocoumarin + holo-[ACP] + H2O. It carries out the reaction 3,5,7,9,11-pentaoxododecanoyl-[ACP] = 6,8-dihydroxy-3-(2-oxopropyl)-isocoumarin + holo-[ACP] + H2O. Functionally, thioesterase; part of the pkg gene cluster that mediates the biosynthesis of dihydrocitreoisocoumarin and 6,8-dihydroxy-3-(2-oxopropyl)-isocoumarin. The non-reducing polyketide synthase pkgA performs the condensation of one acetyl-CoA starter unit with 6 and 5 malonyl-CoA units, respectively. As pkgA lacks a releasing domain, the thioesterase pkgB is necessary to break the thioester bond and release dihydrocitreoisocoumarin and 6,8-dihydroxy-3-(2-oxopropyl)-isocoumarin from pkgA. The polypeptide is Thioesterase pkgB (Emericella nidulans (strain FGSC A4 / ATCC 38163 / CBS 112.46 / NRRL 194 / M139) (Aspergillus nidulans)).